Here is a 691-residue protein sequence, read N- to C-terminus: Elongation factor G (691 aa).

Residues Ser-6 to Ile-281 form the tr-type G domain. GTP-binding positions include Ala-15 to Thr-22, Asp-79 to His-83, and Asn-133 to Asp-136.

It belongs to the TRAFAC class translation factor GTPase superfamily. Classic translation factor GTPase family. EF-G/EF-2 subfamily.

It localises to the cytoplasm. In terms of biological role, catalyzes the GTP-dependent ribosomal translocation step during translation elongation. During this step, the ribosome changes from the pre-translocational (PRE) to the post-translocational (POST) state as the newly formed A-site-bound peptidyl-tRNA and P-site-bound deacylated tRNA move to the P and E sites, respectively. Catalyzes the coordinated movement of the two tRNA molecules, the mRNA and conformational changes in the ribosome. The polypeptide is Elongation factor G (Wolbachia pipientis wMel).